We begin with the raw amino-acid sequence, 260 residues long: Carbonic anhydrase 2 (260 aa).

S2 carries the N-acetylserine modification. A Phosphoserine modification is found at S2. One can recognise an Alpha-carbonic anhydrase domain in the interval 3 to 259 (HHWGYGKHNG…LKNRQIKASF (257 aa)). H64 serves as the catalytic Proton donor/acceptor. Zn(2+) contacts are provided by H94, H96, and H119. Residues S165 and S172 each carry the phosphoserine modification. Substrate is bound at residue 198 to 199 (TT).

It belongs to the alpha-carbonic anhydrase family. Interacts with SLC4A4. Interaction with SLC4A7 regulates SLC4A7 transporter activity. Interacts with SLC26A6 isoform 4 (via C-terminus cytoplasmic domain). Zn(2+) is required as a cofactor. Requires Co(2+) as cofactor.

It localises to the cytoplasm. It is found in the cell membrane. The catalysed reaction is hydrogencarbonate + H(+) = CO2 + H2O. It catalyses the reaction urea = cyanamide + H2O. Activated by X-ray, histamine, L-adrenaline, L- and D-phenylalanine, L- and D-histidine, L-His-OMe and beta-Ala-His (carnosine). Competitively inhibited by saccharin, thioxolone, coumarins, 667-coumate, celecoxib (Celebrex), valdecoxib (Bextra), SC-125, SC-560, diclofenac, acetate, azide, bromide, sulfonamide derivatives such as acetazolamide (AZA), methazolamide (MZA), ethoxzolamide (EZA), dichlorophenamide (DCP), brinzolamide, dansylamide, thiabendazole-5-sulfonamide, trifluoromethane sulfonamide and N-hydroxysulfamide, fructose-based sugar sulfamate RWJ-37497, and Foscarnet (phosphonoformate trisodium salt). Repressed strongly by hydrogen sulfide(HS) and weakly by nitrate (NO(3)). Esterase activity weakly reduced by cyanamide. N-hydroxyurea interferes with zinc binding and inhibit activity. In terms of biological role, catalyzes the reversible hydration of carbon dioxide. Can also hydrate cyanamide to urea. Stimulates the chloride-bicarbonate exchange activity of SLC26A6. Essential for bone resorption and osteoclast differentiation. Involved in the regulation of fluid secretion into the anterior chamber of the eye. Contributes to intracellular pH regulation in the duodenal upper villous epithelium during proton-coupled peptide absorption. The protein is Carbonic anhydrase 2 (CA2) of Homo sapiens (Human).